The chain runs to 648 residues: Wilms tumor protein 1-interacting protein homolog (648 aa).

Disordered regions lie at residues 27–56 (DGMY…KVYS), 142–291 (SNSL…SPRS), and 306–327 (SPRS…GSMS). Composition is skewed to low complexity over residues 158 to 171 (SPRS…SSQD) and 178 to 192 (PRSS…LVSP). 2 stretches are compositionally biased toward polar residues: residues 197–213 (GTSV…TASD) and 220–241 (PRTS…TSGI). Residues 252-267 (PRSSTTSPRSSYSDSR) show a composition bias toward low complexity. LIM zinc-binding domains follow at residues 437–498 (GICV…SGFQ), 502–561 (EKCF…TVFA), and 562–631 (PKCA…RLKT).

This sequence belongs to the zyxin/ajuba family.

The protein resides in the cell junction. It localises to the adherens junction. Its subcellular location is the nucleus. Its function is as follows. May monitor slit diaphragm protein assembly, a specialized adherens junction characteristic of podocytes. In case of podocyte injury, it shuttles into the nucleus and acts as a transcription regulator. Plays a role in the regulation of cell morphology and cytoskeletal organization. Acts as a transcriptional corepressor for snai1 and snai2/slug and plays a role in regulating neural crest development. This chain is Wilms tumor protein 1-interacting protein homolog (wtip), found in Danio rerio (Zebrafish).